The sequence spans 265 residues: MQYGDQTTFKQSLAIQGRVINALLMREIITRYGRKNIGFLWLFVEPLLMTFFIVMMWKFIRADKFSTLNMIAFVMTGYPMAMMWRNASNRAIGSISANLSLLYHRNVRVLDTIFTRVLLEVAGASIAQILFMAVLVLIGWIDAPRDVFYMLMAWFLMAMFAFALGLIICAVAQQFDVFGKIWGTLSFVLLPISGAFFFVHNLPSQAQSIALWLPMIHGTEMFRHGYFGDTVVTYESIGFLVVSDLALLLMGLVMVKNFSKGIEPQ.

Transmembrane regions (helical) follow at residues I37–W57, K64–W84, V121–I141, F148–I168, F178–F198, and E235–V255. The ABC transmembrane type-2 domain maps to I37–F258.

This sequence belongs to the ABC-2 integral membrane protein family.

It is found in the cell inner membrane. Functionally, may form an ATP-driven capsule polysaccharide export apparatus, in association with the BexA, BexC and BexD proteins. In Haemophilus influenzae, this protein is Capsule polysaccharide export inner-membrane protein BexB (bexB).